The chain runs to 98 residues: Cystatin-B (98 aa).

At Met-1 the chain carries N-acetylmethionine. A Secondary area of contact motif is present at residues 46–50; that stretch reads QLVAG.

Belongs to the cystatin family. As to quaternary structure, able to form dimers stabilized by noncovalent forces.

The protein resides in the cytoplasm. In terms of biological role, this is an intracellular thiol proteinase inhibitor. The polypeptide is Cystatin-B (CSTB) (Ovis aries (Sheep)).